Reading from the N-terminus, the 467-residue chain is Asparagine--tRNA ligase (467 aa).

It belongs to the class-II aminoacyl-tRNA synthetase family. As to quaternary structure, homodimer.

The protein localises to the cytoplasm. The enzyme catalyses tRNA(Asn) + L-asparagine + ATP = L-asparaginyl-tRNA(Asn) + AMP + diphosphate + H(+). This Haemophilus influenzae (strain ATCC 51907 / DSM 11121 / KW20 / Rd) protein is Asparagine--tRNA ligase.